A 69-amino-acid polypeptide reads, in one-letter code: Small integral membrane protein 20 (69 aa).

The Mitochondrial matrix segment spans residues 1–8; it reads MAAARNLR. Residues 9–29 form a helical membrane-spanning segment; it reads TALIFGGFISMVGAAFYPIYF. Over 30–69 the chain is Mitochondrial intermembrane; it reads RPLMRLEEYQKEQAVNRAGIVQEDVQPPGLKVWSDPFGRK. Phe66 is subject to Phenylalanine amide.

Component of the MITRAC (mitochondrial translation regulation assembly intermediate of cytochrome c oxidase complex) complex, the core components of this complex being COA3/MITRAC12 and COX14. Interacts with COA3/MITRAC12 and COX4I1. Directly interacts with newly synthesized MT-CO1/COX1. As to expression, highly expressed in the hypothalamus, the spinal cord, and sensory ganglia (at protein level). Also expressed on in the epidermis and dermis layers of the skin (at protein level). Expressed in preadipocytes and adipocytes (at protein level). Expressed in the ovary, specifically in granulosa cells of follicles that have passed the primary stage and in oocytes (at protein level).

It is found in the mitochondrion inner membrane. The protein resides in the secreted. Component of the MITRAC (mitochondrial translation regulation assembly intermediate of cytochrome c oxidase complex) complex, that regulates cytochrome c oxidase assembly. Promotes the progression of complex assembly after the association of MT-CO1/COX1 with COX4I1 and COX6C. Chaperone-like assembly factor required to stabilize newly synthesized MT-CO1/COX1 and to prevent its premature turnover. In terms of biological role, peptide involved in a broad spectrum of regulatory functions. Is a ligand for GPR173. As part of the reproductive cycle, it regulates gonadotropin-releasing hormone (GnRH) signaling in the hypothalamus and pituitary gland which augments the release of luteinizing hormone. More specifically, it regulates the expression of transcription factors CEBPB and POU2F1/OCT1 through the cAMP-PKA signaling pathway, which subsequently regulate the expression of GNRHR and KISS1. Plays a protective role in memory retention through activation of GNRHR. Regulates the secretion of AVP by hypothalamic neurons. Plays a role in the transduction of the itch sensation. Induces anxiolytic effects, reducing behavior associated with anxiety. Regulates food intake as well as satiation and satiety by increasing Nucb2 expression in neurons. In the ovary, it regulates follicular growth by stimulating granulosa cell proliferation by increasing the expression of GPR173, CREB1, CYP19A1, KITLG, FSHR, and LHCGR. It also increases the production of estradiol (E2). In the heart, it regulates contractility and relaxation by activating the AKT1-NOS3 and MAPK1-MAPK3 signaling pathways. It also plays a cardioprotective role during ischemia, where it activates the SAFE and RISK pathways. Stimulates the proliferation and differentiation of preadipocytes. In pancreatic islet cells, it induces proliferation of islet cells as well as the production of INS through activation of the MAPK1-MAPK3 signaling pathways. This chain is Small integral membrane protein 20, found in Mus musculus (Mouse).